A 478-amino-acid polypeptide reads, in one-letter code: ATP synthase subunit beta (478 aa).

164–171 (GGAGVGKT) is a binding site for ATP.

It belongs to the ATPase alpha/beta chains family. As to quaternary structure, F-type ATPases have 2 components, CF(1) - the catalytic core - and CF(0) - the membrane proton channel. CF(1) has five subunits: alpha(3), beta(3), gamma(1), delta(1), epsilon(1). CF(0) has three main subunits: a(1), b(2) and c(9-12). The alpha and beta chains form an alternating ring which encloses part of the gamma chain. CF(1) is attached to CF(0) by a central stalk formed by the gamma and epsilon chains, while a peripheral stalk is formed by the delta and b chains.

It is found in the cell membrane. The catalysed reaction is ATP + H2O + 4 H(+)(in) = ADP + phosphate + 5 H(+)(out). Produces ATP from ADP in the presence of a proton gradient across the membrane. The catalytic sites are hosted primarily by the beta subunits. This is ATP synthase subunit beta from Corynebacterium kroppenstedtii (strain DSM 44385 / JCM 11950 / CIP 105744 / CCUG 35717).